Here is a 51-residue protein sequence, read N- to C-terminus: Insulin (51 aa).

Disulfide bonds link Cys-7/Cys-37, Cys-19/Cys-50, and Cys-36/Cys-41.

It belongs to the insulin family. In terms of assembly, heterodimer of a B chain and an A chain linked by two disulfide bonds.

The protein localises to the secreted. Its function is as follows. Insulin decreases blood glucose concentration. It increases cell permeability to monosaccharides, amino acids and fatty acids. It accelerates glycolysis, the pentose phosphate cycle, and glycogen synthesis in liver. This is Insulin (INS) from Ptyas dhumnades (Big-eyed ratsnake).